Consider the following 126-residue polypeptide: Protein ApaG (126 aa).

The 125-residue stretch at 2–126 folds into the ApaG domain; the sequence is SDSRYKVDVS…FRLAVPGSLH (125 aa).

This chain is Protein ApaG, found in Pseudomonas syringae pv. tomato (strain ATCC BAA-871 / DC3000).